A 255-amino-acid chain; its full sequence is MTLCTRIIPCLDVADGRVVKGVNFTDLMDAGDPVEQAKVYDAAGADELCFLDISASHEGRGTMLDVVARTAEVCFMPLTVGGGVRQVEDARALLLAGADKVAVNSAAVARPELVAEIADRFGAQCVVAAIDARRNGDHWEVYTHGGRRPTGINALDHALNLTRLGAGEILLTSMDKDGTRDGYDLELTRLVADSVPVPVIASGGVGNLDHMVEGVTKGHASALLAASIFHFGQYSLAEAHEALAKAGLTVRHPPE.

Catalysis depends on residues aspartate 12 and aspartate 131.

It belongs to the HisA/HisF family. As to quaternary structure, heterodimer of HisH and HisF.

It is found in the cytoplasm. The catalysed reaction is 5-[(5-phospho-1-deoxy-D-ribulos-1-ylimino)methylamino]-1-(5-phospho-beta-D-ribosyl)imidazole-4-carboxamide + L-glutamine = D-erythro-1-(imidazol-4-yl)glycerol 3-phosphate + 5-amino-1-(5-phospho-beta-D-ribosyl)imidazole-4-carboxamide + L-glutamate + H(+). It functions in the pathway amino-acid biosynthesis; L-histidine biosynthesis; L-histidine from 5-phospho-alpha-D-ribose 1-diphosphate: step 5/9. IGPS catalyzes the conversion of PRFAR and glutamine to IGP, AICAR and glutamate. The HisF subunit catalyzes the cyclization activity that produces IGP and AICAR from PRFAR using the ammonia provided by the HisH subunit. The polypeptide is Imidazole glycerol phosphate synthase subunit HisF (Zymomonas mobilis subsp. mobilis (strain ATCC 31821 / ZM4 / CP4)).